The primary structure comprises 137 residues: Ribosomal RNA large subunit methyltransferase H (137 aa).

S-adenosyl-L-methionine contacts are provided by residues leucine 56, glycine 85, and 104-109 (LSPLTL).

The protein belongs to the RNA methyltransferase RlmH family. Homodimer.

The protein localises to the cytoplasm. The catalysed reaction is pseudouridine(1915) in 23S rRNA + S-adenosyl-L-methionine = N(3)-methylpseudouridine(1915) in 23S rRNA + S-adenosyl-L-homocysteine + H(+). In terms of biological role, specifically methylates the pseudouridine at position 1915 (m3Psi1915) in 23S rRNA. This chain is Ribosomal RNA large subunit methyltransferase H, found in Thermus thermophilus (strain ATCC BAA-163 / DSM 7039 / HB27).